The chain runs to 271 residues: MEVKIFKLSDKYMSFEIDGITPSQANALRRTLINDIPKLAIENVTFHHGEIRDAEGNVYDSSLPLFDEMVAHRLGLIPLKTDLSLNFRDQCSCGGKGCSLCTVTYSINKIGPASVMSGDIQAISHPDLVPVDPDIPIVKLGAKQAILITAEAILGTAKEHAKWQVTSGVAYKYHREFEVNKKLFEDWAKIKERCPKSVLSEDENTIVFTDDYGCNDLSILFESDGVQIKEDDSRFIFHFETDGSLTAEETLSYALNRLMDRWGILVESLSE.

It belongs to the archaeal Rpo3/eukaryotic RPB3 RNA polymerase subunit family. Part of the RNA polymerase complex.

The protein localises to the cytoplasm. It catalyses the reaction RNA(n) + a ribonucleoside 5'-triphosphate = RNA(n+1) + diphosphate. Functionally, DNA-dependent RNA polymerase (RNAP) catalyzes the transcription of DNA into RNA using the four ribonucleoside triphosphates as substrates. The sequence is that of DNA-directed RNA polymerase subunit Rpo3 from Thermoplasma volcanium (strain ATCC 51530 / DSM 4299 / JCM 9571 / NBRC 15438 / GSS1).